Consider the following 334-residue polypeptide: Putative B3 domain-containing protein At5g66980 (334 aa).

2 DNA-binding regions (TF-B3) span residues 8-105 (LQFF…FAND) and 218-317 (HPHF…VSGR).

Its subcellular location is the nucleus. The chain is Putative B3 domain-containing protein At5g66980 from Arabidopsis thaliana (Mouse-ear cress).